The following is a 152-amino-acid chain: Heavy metal-associated isoprenylated plant protein 20 (152 aa).

The HMA domain maps to 27 to 90 (MQTVNIKVKM…RIERTGKKAE (64 aa)). Cd(2+) contacts are provided by cysteine 38 and cysteine 41. Cysteine 149 is modified (cysteine methyl ester). Cysteine 149 carries S-farnesyl cysteine lipidation. A propeptide spans 150–152 (TVM) (removed in mature form).

It belongs to the HIPP family. In terms of assembly, interacts with ZHD11/HB29. In terms of tissue distribution, expressed in roots, shoot apical meristem, leaves and flowers.

The protein localises to the membrane. Heavy-metal-binding protein. Binds cadmium. May be involved in cadmium transport and play a role in cadmium detoxification. In Arabidopsis thaliana (Mouse-ear cress), this protein is Heavy metal-associated isoprenylated plant protein 20.